The sequence spans 776 residues: Endonuclease MutS2 (776 aa).

328-335 (GPNTGGKT) serves as a coordination point for ATP. In terms of domain architecture, Smr spans 701 to 776 (LDLRGKRYEE…GSGATIVTFK (76 aa)).

The protein belongs to the DNA mismatch repair MutS family. MutS2 subfamily. Homodimer. Binds to stalled ribosomes, contacting rRNA.

Endonuclease that is involved in the suppression of homologous recombination and thus may have a key role in the control of bacterial genetic diversity. In terms of biological role, acts as a ribosome collision sensor, splitting the ribosome into its 2 subunits. Detects stalled/collided 70S ribosomes which it binds and splits by an ATP-hydrolysis driven conformational change. Acts upstream of the ribosome quality control system (RQC), a ribosome-associated complex that mediates the extraction of incompletely synthesized nascent chains from stalled ribosomes and their subsequent degradation. Probably generates substrates for RQC. This chain is Endonuclease MutS2, found in Streptococcus mutans serotype c (strain ATCC 700610 / UA159).